The sequence spans 364 residues: 3-isopropylmalate dehydrogenase (364 aa).

NAD(+) is bound at residue 76–89; the sequence is GPKWDGNAPEKRPE. 4 residues coordinate substrate: R96, R106, R134, and D223. D223, D247, and D251 together coordinate Mg(2+). Residue 281 to 293 participates in NAD(+) binding; sequence GSAPDIAGTGAAN.

Belongs to the isocitrate and isopropylmalate dehydrogenases family. LeuB type 1 subfamily. Homodimer. Mg(2+) is required as a cofactor. It depends on Mn(2+) as a cofactor.

It localises to the cytoplasm. The enzyme catalyses (2R,3S)-3-isopropylmalate + NAD(+) = 4-methyl-2-oxopentanoate + CO2 + NADH. The protein operates within amino-acid biosynthesis; L-leucine biosynthesis; L-leucine from 3-methyl-2-oxobutanoate: step 3/4. Functionally, catalyzes the oxidation of 3-carboxy-2-hydroxy-4-methylpentanoate (3-isopropylmalate) to 3-carboxy-4-methyl-2-oxopentanoate. The product decarboxylates to 4-methyl-2 oxopentanoate. The sequence is that of 3-isopropylmalate dehydrogenase from Shouchella clausii (strain KSM-K16) (Alkalihalobacillus clausii).